The following is a 393-amino-acid chain: Pyruvate dehydrogenase E1 component subunit alpha-2, mitochondrial (393 aa).

The transit peptide at 1–28 directs the protein to the mitochondrion; that stretch reads MALSRLSSRSNTFLKPAITALPSSIRRH. 10 residues coordinate pyruvate: His-94, Tyr-120, Arg-121, Gly-169, Val-171, Asp-200, Gly-201, Ala-202, Asn-229, and Tyr-231. The thiamine diphosphate site is built by Tyr-120, Arg-121, Gly-169, Val-171, Asp-200, Gly-201, Ala-202, and Asn-229. Residue Asp-200 coordinates Mg(2+). Mg(2+) is bound by residues Asn-229 and Tyr-231. A thiamine diphosphate-binding site is contributed by His-295.

Tetramer of 2 alpha and 2 beta subunits. Thiamine diphosphate is required as a cofactor. It depends on Mg(2+) as a cofactor.

It localises to the mitochondrion matrix. It carries out the reaction N(6)-[(R)-lipoyl]-L-lysyl-[protein] + pyruvate + H(+) = N(6)-[(R)-S(8)-acetyldihydrolipoyl]-L-lysyl-[protein] + CO2. Its activity is regulated as follows. E1 activity is regulated by phosphorylation (inactivation) and dephosphorylation (activation) of the alpha subunit. Its function is as follows. The pyruvate dehydrogenase complex catalyzes the overall conversion of pyruvate to acetyl-CoA and CO(2). It contains multiple copies of three enzymatic components: pyruvate dehydrogenase (E1), dihydrolipoamide acetyltransferase (E2) and lipoamide dehydrogenase (E3). The protein is Pyruvate dehydrogenase E1 component subunit alpha-2, mitochondrial (IAR4) of Arabidopsis thaliana (Mouse-ear cress).